Consider the following 1387-residue polypeptide: Collagen-like protein 6 (1387 aa).

A glycan (N-linked (GlcNAc...) asparagine; by host) is linked at Asn-6. Collagen-like domains lie at 95 to 154 (GNNG…KGDI), 161 to 220 (GDKG…KGDN), 266 to 325 (GEKG…KGEM), 344 to 403 (GSKG…KGEK), 450 to 508 (IKGD…KGDI), and 512 to 751 (GEKG…SGSS). 3 disordered regions span residues 98–219 (GNNG…DKGD), 268–422 (KGEI…QNQG), and 454–753 (KGEK…SSCQ). Basic and acidic residues-rich tracts occupy residues 114–181 (IKGD…KGSK), 189–199 (SKGDNGDKGSK), 207–219 (SKGD…DKGD), 268–340 (KGEI…DGIK), 364–382 (KGDR…KGDN), 390–405 (SKGD…EKGE), 454–535 (KGEK…KGDI), and 544–747 (KGEK…DKGE). N-linked (GlcNAc...) asparagine; by host glycans are attached at residues Asn-794, Asn-814, Asn-819, Asn-826, Asn-846, Asn-886, Asn-894, Asn-969, Asn-1032, Asn-1077, Asn-1123, Asn-1200, Asn-1224, Asn-1232, and Asn-1233.

Post-translationally, may be hydroxylated on lysine by the viral-encoded procollagen-lysine,2-oxoglutarate 5-dioxygenase.

The protein localises to the virion. In terms of biological role, may participate in the formation of a layer of cross-linked glycosylated fibrils at the viral surface thus giving it a hairy-like appearance. This chain is Collagen-like protein 6, found in Acanthamoeba polyphaga mimivirus (APMV).